The following is an 873-amino-acid chain: MASRRKSTTPCMVLASEQDPDLELISDLDEGPPVLTPVENTRAESISSDEEVHESVDSDNQQNKKVEGGYECKYCTFQTPDLNMFTFHVDSEHPNVVLNSSYVCVECNFLTKRYDALSEHNLKYHPGEENFKLTMVKRNNQTIFEQTINDLTFDGSFVKEENAEQAESTEVSSSGISISKTPIMKMMKNKVENKRIAVHHNSVEDVPEEKENEIKPDREEIVENPSSSASESNTSTSIVNRIHPSTASTVVTPAAVLPGLAQVITAVSAQQNSNLIPKVLIPVNSIPTYNAALDNNPLLLNTYNKFPYPTMSEITVLSAQAKYTEEQIKIWFSAQRLKHGVSWTPEEVEEARRKQFNGTVHTVPQTITVIPTHISTGSNGLPSILQTCQIVGQPGLVLTQVAGTNTLPVTAPIALTVAGVPSQNNIQKSQVPAAQPTAETKPATAAVPTSQSVKHETALVNPDSFGIRAKKTKEQLAELKVSYLKNQFPHDSEIIRLMKITGLTKGEIKKWFSDTRYNQRNSKSNQCLHLNNDSSTTIIIDSSDETTESPTVGTAQPKQSWNPFPDFTPQKFKEKTAEQLRVLQASFLNSSVLTDEELNRLRAQTKLTRREIDAWFTEKKKSKALKEEKMEIDESNAGSSKEEAGETSPADESGAPKSGSTGKICKKTPEQLHMLKSAFVRTQWPSPEEYDKLAKESGLARTDIVSWFGDTRYAWKNGNLKWYYYYQSANSSSMNGLSSLRKRGRGRPKGRGRGRPRGRPRGSKRINNWDRGPSLIKFKTGTAILKDYYLKHKFLNEQDLDELVNKSHMGYEQVREWFAERQRRSELGIELFEENEEEDEVIDDQEEDEEETDDSDTWEPPRHVKRKLSKSDD.

The tract at residues 24–63 (LISDLDEGPPVLTPVENTRAESISSDEEVHESVDSDNQQN) is disordered. Thr36 carries the post-translational modification Phosphothreonine. 3 positions are modified to phosphoserine: Ser45, Ser47, and Ser48. 2 C2H2-type zinc fingers span residues 70-93 (YECK…DSEH) and 102-125 (YVCV…LKYH). A Glycyl lysine isopeptide (Lys-Gly) (interchain with G-Cter in SUMO2) cross-link involves residue Lys159. A Phosphoserine modification is found at Ser202. A disordered region spans residues 202-236 (SVEDVPEEKENEIKPDREEIVENPSSSASESNTST). Residues 212 to 221 (NEIKPDREEI) show a composition bias toward basic and acidic residues. Residues 223–236 (ENPSSSASESNTST) are compositionally biased toward low complexity. Residues 272–432 (NSNLIPKVLI…QNNIQKSQVP (161 aa)) are required for dimerization. A required for interaction with NFYA region spans residues 272–564 (NSNLIPKVLI…AQPKQSWNPF (293 aa)). The segment at residues 284-346 (NSIPTYNAAL…LKHGVSWTPE (63 aa)) is a DNA-binding region (homeobox 1). Residues Lys441, Lys454, Lys485, and Lys629 each participate in a glycyl lysine isopeptide (Lys-Gly) (interchain with G-Cter in SUMO2) cross-link. 2 consecutive DNA-binding regions (homeobox) follow at residues 464–526 (SFGI…KSNQ) and 569–630 (PQKF…EEKM). 2 disordered regions span residues 626-667 (KEEK…ICKK) and 732-770 (SSMN…NNWD). Residue Ser648 is modified to Phosphoserine. Residues 660–722 (STGKICKKTP…YAWKNGNLKW (63 aa)) constitute a DNA-binding region (homeobox 4). Residues 734–768 (MNGLSSLRKRGRGRPKGRGRGRPRGRPRGSKRINN) form a required for nuclear localization region. The span at 740–764 (LRKRGRGRPKGRGRGRPRGRPRGSK) shows a compositional bias: basic residues. Ser774 is subject to Phosphoserine. Positions 777–832 (KFKTGTAILKDYYLKHKFLNEQDLDELVNKSHMGYEQVREWFAERQRRSELGIELF) form a DNA-binding region, homeobox 5. Residues 829–873 (IELFEENEEEDEVIDDQEEDEEETDDSDTWEPPRHVKRKLSKSDD) form a disordered region. A compositionally biased stretch (acidic residues) spans 831–857 (LFEENEEEDEVIDDQEEDEEETDDSDT). Residues 831–873 (LFEENEEEDEVIDDQEEDEEETDDSDTWEPPRHVKRKLSKSDD) are required for repressor activity. Over residues 863–873 (HVKRKLSKSDD) the composition is skewed to basic residues.

This sequence belongs to the ZHX family. As to quaternary structure, forms homodimers. Heterodimer (via HD1 domain) with ZHX2 (via HD1 domain). Also forms a heterodimer with ZHX3 which is a prerequisite for repressor activity. Interacts with ATF7IP and NFYA. Interacts (via homeobox domains) with DNMT3B (via PWWP domain). Ubiquitously expressed. Expressed in podocytes.

The protein resides in the nucleus. Functionally, acts as a transcriptional repressor. Increases DNMT3B-mediated repressive transcriptional activity when DNMT3B is tethered to DNA. May link molecule between DNMT3B and other co-repressor proteins. The polypeptide is Zinc fingers and homeoboxes protein 1 (ZHX1) (Homo sapiens (Human)).